We begin with the raw amino-acid sequence, 186 residues long: ADP-ribosylation factor-like protein DDB_G0292332 (186 aa).

Residues 24–31, 78–82, and 138–141 each bind GTP; these read GVENVGKT, DIGGK, and NKQD.

The protein belongs to the small GTPase superfamily. Arf family.

Binds and exchanges GTP and GDP. In Dictyostelium discoideum (Social amoeba), this protein is ADP-ribosylation factor-like protein DDB_G0292332.